The chain runs to 120 residues: MWGYIHLISWVAIVVLTITALLIYSKSTKSFTMLQMINRVFYILVILSGIMMVKYSIEQSWILAIFKILMGIIVIGVVEMLLSYRKQQKPTGMFLMIFVIVVVITISLGFYLSGGYPLFN.

The next 4 helical transmembrane spans lie at 3–23 (GYIH…ALLI), 33–53 (MLQM…IMMV), 62–82 (ILAI…EMLL), and 92–112 (GMFL…GFYL).

Belongs to the UPF0344 family.

Its subcellular location is the cell membrane. In Listeria monocytogenes serovar 1/2a (strain ATCC BAA-679 / EGD-e), this protein is UPF0344 protein lmo2265.